A 1096-amino-acid chain; its full sequence is Lysine-specific demethylase PHF2 (1096 aa).

The PHD-type zinc finger occupies 5 to 56; it reads PVYCVCRLPYDVTRFMIECDACKDWFHGSCVGVEEEEAPDIDIYHCPNCEKT. Residues threonine 193 and threonine 246 each contribute to the 2-oxoglutarate site. Positions 197 to 353 constitute a JmjC domain; it reads FSDTRMSSFV…MQMRAYEVER (157 aa). Histidine 249 and aspartate 251 together coordinate Fe cation. Residues tyrosine 259, lysine 266, tyrosine 321, and threonine 323 each contribute to the 2-oxoglutarate site. Tyrosine 321 is a Fe cation binding site. 2 disordered regions span residues 447–634 and 646–674; these read KAVR…KDNK and GSKALRPPTSPGVFGALQNFKEDKPKPVR. Serine 474 bears the Phosphoserine mark. Phosphothreonine is present on threonine 479. A compositionally biased stretch (pro residues) spans 503–518; that stretch reads SKIPKPPKPPKPPRPP. Serine 539 is subject to Phosphoserine. 2 stretches are compositionally biased toward basic and acidic residues: residues 548–563 and 578–624; these read LEAHTKEALTKMEPPK and DVVH…KLEK. At serine 655 the chain carries Phosphoserine. The segment covering 665–674 has biased composition (basic and acidic residues); that stretch reads FKEDKPKPVR. Phosphoserine occurs at positions 681 and 705. Lysine 711 is covalently cross-linked (Glycyl lysine isopeptide (Lys-Gly) (interchain with G-Cter in SUMO2)). Disordered stretches follow at residues 719–799, 817–846, and 877–1078; these read TKPK…QGML, AGQAKGSSLAAHGARKNGGGSGKSAGKRLL, and YPSL…MATA. At lysine 720 the chain carries N6-acetyllysine. Residue tyrosine 728 is modified to Phosphotyrosine. Positions 729–757 are enriched in basic and acidic residues; it reads KSDDSSDEGSLHIDTDTKPGRNARVKKES. Serine 730, serine 733, serine 734, and serine 738 each carry phosphoserine. Phosphoserine occurs at positions 879, 882, and 899. The segment covering 916-925 has biased composition (basic and acidic residues); that stretch reads RQDRPVREGT. Basic residues predominate over residues 949 to 959; it reads SKKKKSAKRKL. Composition is skewed to low complexity over residues 960–1009 and 1027–1040; these read TPNT…EGSS and TAAGTFTGAQAGRT. A compositionally biased stretch (polar residues) spans 1053–1065; the sequence is RRPSASSPNNNTA. Serine 1056 bears the Phosphoserine; by PKA mark.

Belongs to the JHDM1 histone demethylase family. JHDM1D subfamily. Component of the PHF2-ARID5B complex, at least composed of PHF2 and ARID5B. Interacts with HNF4A and NR1H4. Interacts with RELA. In terms of processing, phosphorylated by PKA on specific serine residues, leading to the formation of an active lysine demethylase complex. As to expression, widely expressed, including in liver (at protein level).

The protein localises to the nucleus. Its subcellular location is the nucleolus. It is found in the chromosome. The protein resides in the centromere. It localises to the kinetochore. It catalyses the reaction N(6),N(6)-dimethyl-L-lysyl(9)-[histone H3] + 2-oxoglutarate + O2 = N(6)-methyl-L-lysyl(9)-[histone H3] + formaldehyde + succinate + CO2. With respect to regulation, enzymatically inactive by itself, and become active following phosphorylation by PKA. Its function is as follows. Lysine demethylase that demethylates both histones and non-histone proteins. Enzymatically inactive by itself, and becomes active following phosphorylation by PKA: forms a complex with ARID5B and mediates demethylation of methylated ARID5B. Demethylation of ARID5B leads to target the PHF2-ARID5B complex to target promoters, where PHF2 mediates demethylation of dimethylated 'Lys-9' of histone H3 (H3K9me2), followed by transcription activation of target genes. The PHF2-ARID5B complex acts as a coactivator of HNF4A in liver. PHF2 is recruited to trimethylated 'Lys-4' of histone H3 (H3K4me3) at rDNA promoters and promotes expression of rDNA. Involved in the activation of toll-like receptor 4 (TLR4)-target inflammatory genes in macrophages by catalyzing the demethylation of trimethylated histone H4 lysine 20 (H4K20me3) at the gene promoters. In Homo sapiens (Human), this protein is Lysine-specific demethylase PHF2.